We begin with the raw amino-acid sequence, 331 residues long: MRFNGLDLNLLVALDALMTERSLTAAARKINLSQPAMSAAVARLRSYFRDELFAMRGRKLVPTSRAEGLAAPVREALMHIELSIIARDAFDPAQSNRRFRIGLCDFITIVFFRHVAERVAREAPAVSFELVALADEHDELLRRGELDFIILPEPFMSSAHPRIALFEERLVCVGCGTNGELRRRLTFDRYMTMGHVAVKLGVARMPPIEESFLLDRGLNRRIDILVHSYGMIPPMLMGTSRIGTMPLRLVKHFETTMPLRIAELPRPFPTFTEAVQWPVLQNSDPESIWMREILLQEAARMTSTSDDCSMSYASEQADTEGRLTSVASRLS.

The HTH lysR-type domain occupies 6-63 (LDLNLLVALDALMTERSLTAAARKINLSQPAMSAAVARLRSYFRDELFAMRGRKLVPT). Positions 23 to 42 (LTAAARKINLSQPAMSAAVA) form a DNA-binding region, H-T-H motif.

Belongs to the LysR transcriptional regulatory family.

NodD regulates the expression of the nodABCFE genes which encode other nodulation proteins. NodD is also a negative regulator of its own expression. Binds flavonoids as inducers. This is Nodulation protein D 2 (nodD2) from Bradyrhizobium elkanii.